Consider the following 380-residue polypeptide: Chaperone protein DnaJ (380 aa).

Residues 5–70 enclose the J domain; it reads DYYEVLGLQK…EKRAAYDQYG (66 aa). Residues 136–214 form a CR-type zinc finger; sequence GCKKDIRIST…CHGDGRVQKA (79 aa). 8 residues coordinate Zn(2+): Cys149, Cys152, Cys166, Cys169, Cys188, Cys191, Cys202, and Cys205. CXXCXGXG motif repeat units lie at residues 149-156, 166-173, 188-195, and 202-209; these read CDTCHGSG, CSHCHGSG, CPSCHGSG, and CKSCHGDG.

This sequence belongs to the DnaJ family. In terms of assembly, homodimer. Zn(2+) serves as cofactor.

The protein localises to the cytoplasm. Participates actively in the response to hyperosmotic and heat shock by preventing the aggregation of stress-denatured proteins and by disaggregating proteins, also in an autonomous, DnaK-independent fashion. Unfolded proteins bind initially to DnaJ; upon interaction with the DnaJ-bound protein, DnaK hydrolyzes its bound ATP, resulting in the formation of a stable complex. GrpE releases ADP from DnaK; ATP binding to DnaK triggers the release of the substrate protein, thus completing the reaction cycle. Several rounds of ATP-dependent interactions between DnaJ, DnaK and GrpE are required for fully efficient folding. Also involved, together with DnaK and GrpE, in the DNA replication of plasmids through activation of initiation proteins. In Actinobacillus pleuropneumoniae serotype 5b (strain L20), this protein is Chaperone protein DnaJ.